We begin with the raw amino-acid sequence, 163 residues long: NADH-quinone oxidoreductase subunit I (163 aa).

2 4Fe-4S ferredoxin-type domains span residues 54 to 84 (LRRY…IESD) and 94 to 123 (TRYD…ETQI). [4Fe-4S] cluster is bound by residues cysteine 64, cysteine 67, cysteine 70, cysteine 74, cysteine 103, cysteine 106, cysteine 109, and cysteine 113.

Belongs to the complex I 23 kDa subunit family. In terms of assembly, NDH-1 is composed of 14 different subunits. Subunits NuoA, H, J, K, L, M, N constitute the membrane sector of the complex. [4Fe-4S] cluster serves as cofactor.

The protein localises to the cell inner membrane. The enzyme catalyses a quinone + NADH + 5 H(+)(in) = a quinol + NAD(+) + 4 H(+)(out). In terms of biological role, NDH-1 shuttles electrons from NADH, via FMN and iron-sulfur (Fe-S) centers, to quinones in the respiratory chain. The immediate electron acceptor for the enzyme in this species is believed to be ubiquinone. Couples the redox reaction to proton translocation (for every two electrons transferred, four hydrogen ions are translocated across the cytoplasmic membrane), and thus conserves the redox energy in a proton gradient. The sequence is that of NADH-quinone oxidoreductase subunit I from Cupriavidus necator (strain ATCC 17699 / DSM 428 / KCTC 22496 / NCIMB 10442 / H16 / Stanier 337) (Ralstonia eutropha).